Consider the following 408-residue polypeptide: Argininosuccinate synthase (408 aa).

ATP-binding positions include 11-19 (AYSGGLDTS) and Ala-38. Tyr-91 and Ser-96 together coordinate L-citrulline. Residue Gly-121 participates in ATP binding. L-aspartate contacts are provided by Thr-123, Asn-127, and Asp-128. L-citrulline is bound at residue Asn-127. Residues Arg-131, Ser-182, Ser-191, Glu-267, and Tyr-279 each coordinate L-citrulline.

Belongs to the argininosuccinate synthase family. Type 1 subfamily. As to quaternary structure, homotetramer.

The protein localises to the cytoplasm. The enzyme catalyses L-citrulline + L-aspartate + ATP = 2-(N(omega)-L-arginino)succinate + AMP + diphosphate + H(+). It functions in the pathway amino-acid biosynthesis; L-arginine biosynthesis; L-arginine from L-ornithine and carbamoyl phosphate: step 2/3. This Zymomonas mobilis subsp. mobilis (strain ATCC 31821 / ZM4 / CP4) protein is Argininosuccinate synthase.